A 194-amino-acid polypeptide reads, in one-letter code: Fibroblast growth factor 7 (194 aa).

The signal sequence occupies residues 1–31; sequence MRKWILTWILPSLLHRSCFHIICLVGTLSLD. An N-linked (GlcNAc...) asparagine glycan is attached at asparagine 45.

The protein belongs to the heparin-binding growth factors family. As to quaternary structure, interacts with FGFBP1. Interacts with FGFR2. Affinity between fibroblast growth factors (FGFs) and their receptors is increased by heparan sulfate glycosaminoglycans that function as coreceptors.

It localises to the secreted. In terms of biological role, plays an important role in the regulation of embryonic development, cell proliferation and cell differentiation. Required for normal branching morphogenesis. Growth factor active on keratinocytes. Possible major paracrine effector of normal epithelial cell proliferation. The sequence is that of Fibroblast growth factor 7 (FGF7) from Sus scrofa (Pig).